A 352-amino-acid polypeptide reads, in one-letter code: Anthranilate phosphoribosyltransferase (352 aa).

5-phospho-alpha-D-ribose 1-diphosphate contacts are provided by residues G82, 85-86 (GD), S90, 92-95 (NIST), 110-118 (KHGNRAVTG), and G122. G82 is an anthranilate binding site. Mg(2+) is bound at residue S94. N113 provides a ligand contact to anthranilate. R168 provides a ligand contact to anthranilate. Residues D232 and E233 each contribute to the Mg(2+) site.

Belongs to the anthranilate phosphoribosyltransferase family. In terms of assembly, homodimer. The cofactor is Mg(2+).

The enzyme catalyses N-(5-phospho-beta-D-ribosyl)anthranilate + diphosphate = 5-phospho-alpha-D-ribose 1-diphosphate + anthranilate. The protein operates within amino-acid biosynthesis; L-tryptophan biosynthesis; L-tryptophan from chorismate: step 2/5. In terms of biological role, catalyzes the transfer of the phosphoribosyl group of 5-phosphorylribose-1-pyrophosphate (PRPP) to anthranilate to yield N-(5'-phosphoribosyl)-anthranilate (PRA). The polypeptide is Anthranilate phosphoribosyltransferase (Methanothermobacter thermautotrophicus (strain ATCC 29096 / DSM 1053 / JCM 10044 / NBRC 100330 / Delta H) (Methanobacterium thermoautotrophicum)).